The primary structure comprises 786 residues: Endonuclease MutS2 (786 aa).

An ATP-binding site is contributed by 333 to 340 (GPNTGGKT). The 76-residue stretch at 711–786 (LDLRGERYDQ…GSGATIVNFK (76 aa)) folds into the Smr domain.

This sequence belongs to the DNA mismatch repair MutS family. MutS2 subfamily. In terms of assembly, homodimer. Binds to stalled ribosomes, contacting rRNA.

Functionally, endonuclease that is involved in the suppression of homologous recombination and thus may have a key role in the control of bacterial genetic diversity. Acts as a ribosome collision sensor, splitting the ribosome into its 2 subunits. Detects stalled/collided 70S ribosomes which it binds and splits by an ATP-hydrolysis driven conformational change. Acts upstream of the ribosome quality control system (RQC), a ribosome-associated complex that mediates the extraction of incompletely synthesized nascent chains from stalled ribosomes and their subsequent degradation. Probably generates substrates for RQC. This is Endonuclease MutS2 from Lacticaseibacillus paracasei (strain ATCC 334 / BCRC 17002 / CCUG 31169 / CIP 107868 / KCTC 3260 / NRRL B-441) (Lactobacillus paracasei).